Consider the following 103-residue polypeptide: Large ribosomal subunit protein eL43 (103 aa).

The protein belongs to the eukaryotic ribosomal protein eL43 family.

In Tetrahymena thermophila (strain SB210), this protein is Large ribosomal subunit protein eL43 (RPL37A).